Consider the following 597-residue polypeptide: MPDVPALMLSLSNTLDAQLRAAMQRAFPVADAVLDPQLAPASKPEFGDFQANGALPLAKPLKQAPRQIATAIVEQLQADSGFTDLCLEPQIAGPGFINLTIRPERLAAEVSARLGDERLGVPAVEQAAPVVVDFSSPNIAKEMHVGHLRSTIIGDSLARVLEFRGHTVLRLNHVGDWGTQFGMLITHLKQVAPDALETADAVDLGDLVAFYREAKKRFDDDEAFQSTSREEVVKLQGGDPVSLKAWGLLCDQSRREFQKIYDRLDIRLNERGESFYNPFLPAVIDGLKAAELLVTDDGAQCVFLEGVQGKDGKPLPVIVQKSDGGFNYATTDLAAIRYRFGAAPDGDGARRVVYVTDAGQANHFAGVFQVAERAGWIPDGARLEHVPFGLVQGEDGKKLKTRAGDTVRLRDLLDEAVERAETDLRSRLKEEERSESEEFIQNVAGTVGLAAVKYADLSQNRITNYQFSFDRMLALQGNTAPYLLYAVVRIAGIARKGGDLEVSTGQLQFSEPQEWALVRELLKFDSVIAEVEEELLPNRLCSYLFELSQVFNRFYDQVPVLKADPEALASRLALCRLTADTLRLGLGLLGIATLDRM.

The 'HIGH' region motif lies at 137–147; it reads PNIAKEMHVGH.

The protein belongs to the class-I aminoacyl-tRNA synthetase family. As to quaternary structure, monomer.

It is found in the cytoplasm. It carries out the reaction tRNA(Arg) + L-arginine + ATP = L-arginyl-tRNA(Arg) + AMP + diphosphate. The sequence is that of Arginine--tRNA ligase from Parasynechococcus marenigrum (strain WH8102).